The sequence spans 338 residues: NADPH dehydrogenase (338 aa).

An FMN-binding site is contributed by 23-26 (SPMC). Y28 lines the substrate pocket. Residues A60 and Q102 each contribute to the FMN site. Position 163-166 (163-166 (HGAH)) interacts with substrate. Residues R214 and 306 to 307 (AR) each bind FMN.

Belongs to the NADH:flavin oxidoreductase/NADH oxidase family. NamA subfamily. In terms of assembly, homotetramer. FMN serves as cofactor.

The enzyme catalyses A + NADPH + H(+) = AH2 + NADP(+). Catalyzes the reduction of the double bond of an array of alpha,beta-unsaturated aldehydes and ketones. It also reduces the nitro group of nitroester and nitroaromatic compounds. It could have a role in detoxification processes. This chain is NADPH dehydrogenase, found in Halalkalibacterium halodurans (strain ATCC BAA-125 / DSM 18197 / FERM 7344 / JCM 9153 / C-125) (Bacillus halodurans).